Here is a 166-residue protein sequence, read N- to C-terminus: Crossover junction endodeoxyribonuclease RuvC (166 aa).

Residues Asp12, Glu71, and Asp143 contribute to the active site. Residues Asp12, Glu71, and Asp143 each contribute to the Mg(2+) site.

The protein belongs to the RuvC family. In terms of assembly, homodimer which binds Holliday junction (HJ) DNA. The HJ becomes 2-fold symmetrical on binding to RuvC with unstacked arms; it has a different conformation from HJ DNA in complex with RuvA. In the full resolvosome a probable DNA-RuvA(4)-RuvB(12)-RuvC(2) complex forms which resolves the HJ. The cofactor is Mg(2+).

It is found in the cytoplasm. It catalyses the reaction Endonucleolytic cleavage at a junction such as a reciprocal single-stranded crossover between two homologous DNA duplexes (Holliday junction).. The RuvA-RuvB-RuvC complex processes Holliday junction (HJ) DNA during genetic recombination and DNA repair. Endonuclease that resolves HJ intermediates. Cleaves cruciform DNA by making single-stranded nicks across the HJ at symmetrical positions within the homologous arms, yielding a 5'-phosphate and a 3'-hydroxyl group; requires a central core of homology in the junction. The consensus cleavage sequence is 5'-(A/T)TT(C/G)-3'. Cleavage occurs on the 3'-side of the TT dinucleotide at the point of strand exchange. HJ branch migration catalyzed by RuvA-RuvB allows RuvC to scan DNA until it finds its consensus sequence, where it cleaves and resolves the cruciform DNA. This Oleidesulfovibrio alaskensis (strain ATCC BAA-1058 / DSM 17464 / G20) (Desulfovibrio alaskensis) protein is Crossover junction endodeoxyribonuclease RuvC.